Consider the following 515-residue polypeptide: Recombining binding protein suppressor of hairless-like protein (515 aa).

Positions 1-40 (MDPRETTDPSLPPGPLTHLSLPDSSEVRLQSDGPSLLGSW) are disordered. 3 DNA-binding regions span residues 76–86 (QKSYGNEKRFF), 191–196 (SKPSQK), and 218–223 (RLRSQT). In terms of domain architecture, IPT/TIG spans 384–474 (PLISTLELSG…YPSPFSFTYT (91 aa)).

The protein belongs to the Su(H) family. As to quaternary structure, interacts weakly with EBNA2. Does not interact with any Notch proteins. Highly expressed in lung. Also detected in spleen, and brain.

It is found in the nucleus. Functionally, putative transcription factor, which cooperates with EBNA2 to activate transcription. This Mus musculus (Mouse) protein is Recombining binding protein suppressor of hairless-like protein (Rbpjl).